A 473-amino-acid chain; its full sequence is B box and SPRY domain-containing protein (473 aa).

The disordered stretch occupies residues 1-69; that stretch reads MSADVSGTES…PKQGSERSQL (69 aa). A compositionally biased stretch (pro residues) spans 35–51; it reads KPGPGPEPRPESGPEPG. A B box-type zinc finger spans residues 65–113; that stretch reads ERSQLCPEHFEPLSWFCLSERRPVCATCAGFGGRCHRHRIRRAEEHAEE. The B30.2/SPRY domain maps to 259–455; that stretch reads SPLLTQLWAA…ISIVRGPLAT (197 aa).

Interacts with YWHAZ/14-3-3 protein zeta. Interacts with TRPV5 and TRPV6. In terms of tissue distribution, according to PubMed:10978534, testis-specific. According to PubMed:16371431, broadly expressed.

It is found in the cytoplasm. The protein localises to the membrane. Its function is as follows. May regulate epithelial calcium transport by inhibiting TRPV5 activity. The protein is B box and SPRY domain-containing protein (Bspry) of Mus musculus (Mouse).